We begin with the raw amino-acid sequence, 374 residues long: Probable quinol oxidase subunit 2 (374 aa).

The N-terminal stretch at 1–19 is a signal peptide; the sequence is MSKFKSLLLLFGTLILLSG. C20 is lipidated: N-palmitoyl cysteine. The S-diacylglycerol cysteine moiety is linked to residue C20. 2 helical membrane passes run 43 to 63 and 82 to 102; these read SIIFMLVIVAVVLSMFAIFIF and IETIWFVVPILIVIALAIPTV. Residues 317-374 form a disordered region; that stretch reads ERHGMKPMILGNNEKYDNEFKKEEDHNSKEMEKISKGAKDENASKLHKKEHDDHGGGH. Over residues 330–374 the composition is skewed to basic and acidic residues; that stretch reads EKYDNEFKKEEDHNSKEMEKISKGAKDENASKLHKKEHDDHGGGH.

It belongs to the cytochrome c oxidase subunit 2 family.

Its subcellular location is the cell membrane. It catalyses the reaction 2 a quinol + O2 = 2 a quinone + 2 H2O. In terms of biological role, catalyzes quinol oxidation with the concomitant reduction of oxygen to water. Subunit II transfers the electrons from a quinol to the binuclear center of the catalytic subunit I. This is Probable quinol oxidase subunit 2 (qoxA) from Staphylococcus epidermidis (strain ATCC 12228 / FDA PCI 1200).